The sequence spans 219 residues: UPF0319 protein MS0844 (219 aa).

Residues 1–21 form the signal peptide; sequence MKFRLTALAVAALLTSTASFA.

This sequence belongs to the UPF0319 family.

In Mannheimia succiniciproducens (strain KCTC 0769BP / MBEL55E), this protein is UPF0319 protein MS0844.